Consider the following 98-residue polypeptide: Large ribosomal subunit protein uL23 (98 aa).

It belongs to the universal ribosomal protein uL23 family. In terms of assembly, part of the 50S ribosomal subunit. Contacts protein L29, and trigger factor when it is bound to the ribosome.

Its function is as follows. One of the early assembly proteins it binds 23S rRNA. One of the proteins that surrounds the polypeptide exit tunnel on the outside of the ribosome. Forms the main docking site for trigger factor binding to the ribosome. This is Large ribosomal subunit protein uL23 from Parafrankia sp. (strain EAN1pec).